Consider the following 348-residue polypeptide: Anthranilate phosphoribosyltransferase (348 aa).

Residues glycine 81, glycine 84 to aspartate 85, asparagine 91 to threonine 94, lysine 109 to glycine 117, and serine 121 each bind 5-phospho-alpha-D-ribose 1-diphosphate. Glycine 81 is an anthranilate binding site. Residue serine 93 participates in Mg(2+) binding. Asparagine 112 contacts anthranilate. Arginine 167 contacts anthranilate. Mg(2+)-binding residues include aspartate 226 and glutamate 227.

This sequence belongs to the anthranilate phosphoribosyltransferase family. As to quaternary structure, homodimer. It depends on Mg(2+) as a cofactor.

It carries out the reaction N-(5-phospho-beta-D-ribosyl)anthranilate + diphosphate = 5-phospho-alpha-D-ribose 1-diphosphate + anthranilate. It participates in amino-acid biosynthesis; L-tryptophan biosynthesis; L-tryptophan from chorismate: step 2/5. Its function is as follows. Catalyzes the transfer of the phosphoribosyl group of 5-phosphorylribose-1-pyrophosphate (PRPP) to anthranilate to yield N-(5'-phosphoribosyl)-anthranilate (PRA). The polypeptide is Anthranilate phosphoribosyltransferase (Ectopseudomonas mendocina (strain ymp) (Pseudomonas mendocina)).